The following is a 45-amino-acid chain: Large ribosomal subunit protein bL34 (45 aa).

Positions 1–27 (MTKRTLGGTSRKRKRVSGFRVRMRSHT) are disordered. A compositionally biased stretch (basic residues) spans 10–27 (SRKRKRVSGFRVRMRSHT).

It belongs to the bacterial ribosomal protein bL34 family.

The protein is Large ribosomal subunit protein bL34 of Synechococcus sp. (strain CC9902).